The following is a 607-amino-acid chain: Chaperone protein DnaK (607 aa).

At Thr-174 the chain carries Phosphothreonine; by autocatalysis. Over residues 577 to 594 (QSAGSTAGNPGQGQSTEN) the composition is skewed to polar residues. The tract at residues 577-607 (QSAGSTAGNPGQGQSTENPGGKTIDGDYKVN) is disordered.

It belongs to the heat shock protein 70 family.

Functionally, acts as a chaperone. The chain is Chaperone protein DnaK from Dictyoglomus turgidum (strain DSM 6724 / Z-1310).